A 350-amino-acid polypeptide reads, in one-letter code: dTDP-D-glucose 4,6-dehydratase (350 aa).

T142 lines the substrate pocket. Catalysis depends on D143, which acts as the Proton donor. Residues E144 and Y166 each act as proton acceptor in the active site.

It belongs to the NAD(P)-dependent epimerase/dehydratase family. dTDP-glucose dehydratase subfamily. It depends on NAD(+) as a cofactor.

The enzyme catalyses dTDP-alpha-D-glucose = dTDP-4-dehydro-6-deoxy-alpha-D-glucose + H2O. The sequence is that of dTDP-D-glucose 4,6-dehydratase (TGDS) from Homo sapiens (Human).